A 331-amino-acid polypeptide reads, in one-letter code: DNA-directed RNA polymerase subunit alpha (331 aa).

The alpha N-terminal domain (alpha-NTD) stretch occupies residues 1–237 (MQSFEKEFLK…DQLSSFIDLK (237 aa)). Positions 251–331 (FDPSLLNLVD…NWPPKHLSEQ (81 aa)) are alpha C-terminal domain (alpha-CTD).

The protein belongs to the RNA polymerase alpha chain family. In terms of assembly, homodimer. The RNAP catalytic core consists of 2 alpha, 1 beta, 1 beta' and 1 omega subunit. When a sigma factor is associated with the core the holoenzyme is formed, which can initiate transcription.

The catalysed reaction is RNA(n) + a ribonucleoside 5'-triphosphate = RNA(n+1) + diphosphate. DNA-dependent RNA polymerase catalyzes the transcription of DNA into RNA using the four ribonucleoside triphosphates as substrates. The sequence is that of DNA-directed RNA polymerase subunit alpha from Blochmanniella floridana.